Consider the following 87-residue polypeptide: Probable acyl carrier protein PigG (87 aa).

Residues 1–78 (MLESKLINHI…SMVALVQRLK (78 aa)) form the Carrier domain. Position 36 is an O-(pantetheine 4'-phosphoryl)serine (S36).

Its pathway is antibiotic biosynthesis; prodigiosin biosynthesis. Its function is as follows. Involved in the biosynthesis of 4-methoxy-2,2'-bipyrrole-5-carbaldehyde (MBC), one of the terminal products involved in the biosynthesis of the red antibiotic prodigiosin (Pig). Carrier of the L-prolyl group transferred from L-prolyl-AMP by PigI. This chain is Probable acyl carrier protein PigG, found in Serratia sp. (strain ATCC 39006) (Prodigiosinella confusarubida).